The sequence spans 458 residues: RuvB-like helicase 1 (458 aa).

71–78 (GGPGTGKT) is a binding site for ATP.

Belongs to the RuvB family. May form heterododecamers with hel-2/rvb2. Component of the SWR1 chromatin remodeling complex, the INO80 chromatin remodeling complex, and of the R2TP complex.

It localises to the nucleus. It catalyses the reaction ATP + H2O = ADP + phosphate + H(+). Functionally, DNA helicase which participates in several chromatin remodeling complexes, including the SWR1 and the INO80 complexes. The SWR1 complex mediates the ATP-dependent exchange of histone H2A for the H2A variant H2A.Z leading to transcriptional regulation of selected genes by chromatin remodeling. The INO80 complex remodels chromatin by shifting nucleosomes and is involved in DNA repair. Also involved in pre-rRNA processing. The protein is RuvB-like helicase 1 (hel-1) of Neurospora crassa (strain ATCC 24698 / 74-OR23-1A / CBS 708.71 / DSM 1257 / FGSC 987).